The primary structure comprises 202 residues: UPF0301 protein BCG_0069 (202 aa).

The protein belongs to the UPF0301 (AlgH) family.

The polypeptide is UPF0301 protein BCG_0069 (Mycobacterium bovis (strain BCG / Pasteur 1173P2)).